Here is a 281-residue protein sequence, read N- to C-terminus: DegV domain-containing protein SCO2569 (281 aa).

Residues 5-280 (VAIVTDSTAY…PGLLGVVVSS (276 aa)) form the DegV domain. The hexadecanoate site is built by Thr-62 and Ser-95.

Functionally, may bind long-chain fatty acids, such as palmitate, and may play a role in lipid transport or fatty acid metabolism. This chain is DegV domain-containing protein SCO2569, found in Streptomyces coelicolor (strain ATCC BAA-471 / A3(2) / M145).